A 420-amino-acid chain; its full sequence is Ribosome biogenesis protein WDR12 homolog (420 aa).

A ubiquitin-like (UBL) domain region spans residues V10–E92. WD repeat units lie at residues L104–S142, G143–D185, G192–G231, G250–E288, S290–V329, G335–Y375, and G379–T417.

The protein belongs to the WD repeat WDR12/YTM1 family.

Its subcellular location is the nucleus. It is found in the nucleolus. The protein resides in the nucleoplasm. Functionally, required for maturation of ribosomal RNAs and formation of the large ribosomal subunit. In Drosophila sechellia (Fruit fly), this protein is Ribosome biogenesis protein WDR12 homolog.